Here is a 397-residue protein sequence, read N- to C-terminus: CCA-adding enzyme (397 aa).

2 residues coordinate ATP: G26 and R29. G26 and R29 together coordinate CTP. Mg(2+)-binding residues include D39 and D41. R110, D153, R156, R159, and R162 together coordinate ATP. CTP-binding residues include R110, D153, R156, R159, and R162.

It belongs to the tRNA nucleotidyltransferase/poly(A) polymerase family. Bacterial CCA-adding enzyme type 3 subfamily. Homodimer. It depends on Mg(2+) as a cofactor.

It catalyses the reaction a tRNA precursor + 2 CTP + ATP = a tRNA with a 3' CCA end + 3 diphosphate. The catalysed reaction is a tRNA with a 3' CCA end + 2 CTP + ATP = a tRNA with a 3' CCACCA end + 3 diphosphate. Catalyzes the addition and repair of the essential 3'-terminal CCA sequence in tRNAs without using a nucleic acid template. Adds these three nucleotides in the order of C, C, and A to the tRNA nucleotide-73, using CTP and ATP as substrates and producing inorganic pyrophosphate. tRNA 3'-terminal CCA addition is required both for tRNA processing and repair. Also involved in tRNA surveillance by mediating tandem CCA addition to generate a CCACCA at the 3' terminus of unstable tRNAs. While stable tRNAs receive only 3'-terminal CCA, unstable tRNAs are marked with CCACCA and rapidly degraded. This chain is CCA-adding enzyme, found in Bacillus cytotoxicus (strain DSM 22905 / CIP 110041 / 391-98 / NVH 391-98).